A 571-amino-acid polypeptide reads, in one-letter code: Sulfite reductase [NADPH] hemoprotein beta-component (571 aa).

Cys435, Cys441, Cys480, and Cys484 together coordinate [4Fe-4S] cluster. Cys484 lines the siroheme pocket.

It belongs to the nitrite and sulfite reductase 4Fe-4S domain family. In terms of assembly, alpha(8)-beta(8). The alpha component is a flavoprotein, the beta component is a hemoprotein. It depends on siroheme as a cofactor. Requires [4Fe-4S] cluster as cofactor.

It carries out the reaction hydrogen sulfide + 3 NADP(+) + 3 H2O = sulfite + 3 NADPH + 4 H(+). It participates in sulfur metabolism; hydrogen sulfide biosynthesis; hydrogen sulfide from sulfite (NADPH route): step 1/1. In terms of biological role, component of the sulfite reductase complex that catalyzes the 6-electron reduction of sulfite to sulfide. This is one of several activities required for the biosynthesis of L-cysteine from sulfate. The protein is Sulfite reductase [NADPH] hemoprotein beta-component of Erwinia tasmaniensis (strain DSM 17950 / CFBP 7177 / CIP 109463 / NCPPB 4357 / Et1/99).